A 496-amino-acid chain; its full sequence is Lysine--tRNA ligase (496 aa).

Positions 405 and 412 each coordinate Mg(2+).

Belongs to the class-II aminoacyl-tRNA synthetase family. In terms of assembly, homodimer. Mg(2+) is required as a cofactor.

It localises to the cytoplasm. It catalyses the reaction tRNA(Lys) + L-lysine + ATP = L-lysyl-tRNA(Lys) + AMP + diphosphate. This Vesicomyosocius okutanii subsp. Calyptogena okutanii (strain HA) protein is Lysine--tRNA ligase.